Consider the following 376-residue polypeptide: Deoxyguanosinetriphosphate triphosphohydrolase-like protein (376 aa).

An HD domain is found at 62–198; that stretch reads RLTHSLEVSA…AALADDISYI (137 aa).

The protein belongs to the dGTPase family. Type 2 subfamily.

This Rickettsia canadensis (strain McKiel) protein is Deoxyguanosinetriphosphate triphosphohydrolase-like protein.